A 57-amino-acid chain; its full sequence is UPF0391 membrane protein XOO1885 (57 aa).

The next 2 membrane-spanning stretches (helical) occupy residues 4–24 (WAII…GGMA) and 33–53 (FLFW…MTIA).

Belongs to the UPF0391 family.

The protein localises to the cell membrane. The protein is UPF0391 membrane protein XOO1885 of Xanthomonas oryzae pv. oryzae (strain KACC10331 / KXO85).